We begin with the raw amino-acid sequence, 119 residues long: Ribonuclease P protein component (119 aa).

This sequence belongs to the RnpA family. Consists of a catalytic RNA component (M1 or rnpB) and a protein subunit.

It carries out the reaction Endonucleolytic cleavage of RNA, removing 5'-extranucleotides from tRNA precursor.. In terms of biological role, RNaseP catalyzes the removal of the 5'-leader sequence from pre-tRNA to produce the mature 5'-terminus. It can also cleave other RNA substrates such as 4.5S RNA. The protein component plays an auxiliary but essential role in vivo by binding to the 5'-leader sequence and broadening the substrate specificity of the ribozyme. The polypeptide is Ribonuclease P protein component (Beutenbergia cavernae (strain ATCC BAA-8 / DSM 12333 / CCUG 43141 / JCM 11478 / NBRC 16432 / NCIMB 13614 / HKI 0122)).